The chain runs to 89 residues: Small ribosomal subunit protein uS15 (89 aa).

Belongs to the universal ribosomal protein uS15 family. In terms of assembly, part of the 30S ribosomal subunit. Forms a bridge to the 50S subunit in the 70S ribosome, contacting the 23S rRNA.

In terms of biological role, one of the primary rRNA binding proteins, it binds directly to 16S rRNA where it helps nucleate assembly of the platform of the 30S subunit by binding and bridging several RNA helices of the 16S rRNA. Forms an intersubunit bridge (bridge B4) with the 23S rRNA of the 50S subunit in the ribosome. The sequence is that of Small ribosomal subunit protein uS15 from Exiguobacterium sibiricum (strain DSM 17290 / CCUG 55495 / CIP 109462 / JCM 13490 / 255-15).